The chain runs to 557 residues: Ubiquitin C-terminal hydrolase 22 (557 aa).

The UBP-type; degenerate zinc-finger motif lies at 36-130 (FRCFNDARIK…VSKQLFGLGM (95 aa)). Positions 56, 59, 69, 72, 77, 80, 84, and 91 each coordinate Zn(2+). The USP domain occupies 177–531 (RGLNNLGSTC…ECYMLFYAQE (355 aa)). Cys186 functions as the Nucleophile in the catalytic mechanism. Catalysis depends on His491, which acts as the Proton acceptor.

This sequence belongs to the peptidase C19 family. As to quaternary structure, component of a deubiquitination module (DUB module) formed by ENY2, SGF11, and UBP22 in Arabidopsis. Interacts directly with SGF11, but not with ENY2.

It localises to the nucleus. The protein localises to the nucleoplasm. It carries out the reaction Thiol-dependent hydrolysis of ester, thioester, amide, peptide and isopeptide bonds formed by the C-terminal Gly of ubiquitin (a 76-residue protein attached to proteins as an intracellular targeting signal).. Its function is as follows. Component of a deubiquitination module (DUB module) that specifically deubiquinates monoubiquinated histone H2B (H2Bub). Does not seem to be a component of the TREX-2 complex. Seems to act independently of the SAGA multiprotein complex. The DUB module is responsible for the major H2Bub deubiquitinase activity in Arabidopsis. This chain is Ubiquitin C-terminal hydrolase 22, found in Arabidopsis thaliana (Mouse-ear cress).